Reading from the N-terminus, the 328-residue chain is Acetaldehyde dehydrogenase 3 (328 aa).

Position 17 to 20 (17 to 20) interacts with NAD(+); that stretch reads SGNI. C135 functions as the Acyl-thioester intermediate in the catalytic mechanism. Residues 166-174 and N298 contribute to the NAD(+) site; that span reads SAGPGTRAN.

This sequence belongs to the acetaldehyde dehydrogenase family.

It carries out the reaction acetaldehyde + NAD(+) + CoA = acetyl-CoA + NADH + H(+). In Nocardia farcinica (strain IFM 10152), this protein is Acetaldehyde dehydrogenase 3.